A 262-amino-acid polypeptide reads, in one-letter code: MSTHANHPFHLVDYSPWPLTGAIGAMTTVTGLVQWFHQYDNTLFLLGNIITMLTMYQWWRDISREGTFQGLHTIPVTLGLRWGMILFIISEVFFFISFFWAFFHSSLSPTIELGMVWPPIGIEPFNPFQIPLLNTAILLASGVTVTWAHHSLMENNHTQTIQSLFFTVLLGIYFSILQAYEYIEAPFTIADNVYGSTFFVATGFHGLHVLIGTSFLLICLFRHMNCHFSSSHHFGFEAAAWYWHFVDVVWLFLYISIYWWGN.

The next 7 membrane-spanning stretches (helical) occupy residues 16–36 (PWPL…VQWF), 42–59 (TLFL…YQWW), 83–103 (GMIL…WAFF), 128–148 (FQIP…VTWA), 163–183 (SLFF…YEYI), 198–218 (FFVA…FLLI), and 240–260 (AWYW…IYWW).

This sequence belongs to the cytochrome c oxidase subunit 3 family. Component of the cytochrome c oxidase (complex IV, CIV), a multisubunit enzyme composed of a catalytic core of 3 subunits and several supernumerary subunits. The complex exists as a monomer or a dimer and forms supercomplexes (SCs) in the inner mitochondrial membrane with ubiquinol-cytochrome c oxidoreductase (cytochrome b-c1 complex, complex III, CIII).

It is found in the mitochondrion inner membrane. The catalysed reaction is 4 Fe(II)-[cytochrome c] + O2 + 8 H(+)(in) = 4 Fe(III)-[cytochrome c] + 2 H2O + 4 H(+)(out). Functionally, component of the cytochrome c oxidase, the last enzyme in the mitochondrial electron transport chain which drives oxidative phosphorylation. The respiratory chain contains 3 multisubunit complexes succinate dehydrogenase (complex II, CII), ubiquinol-cytochrome c oxidoreductase (cytochrome b-c1 complex, complex III, CIII) and cytochrome c oxidase (complex IV, CIV), that cooperate to transfer electrons derived from NADH and succinate to molecular oxygen, creating an electrochemical gradient over the inner membrane that drives transmembrane transport and the ATP synthase. Cytochrome c oxidase is the component of the respiratory chain that catalyzes the reduction of oxygen to water. Electrons originating from reduced cytochrome c in the intermembrane space (IMS) are transferred via the dinuclear copper A center (CU(A)) of subunit 2 and heme A of subunit 1 to the active site in subunit 1, a binuclear center (BNC) formed by heme A3 and copper B (CU(B)). The BNC reduces molecular oxygen to 2 water molecules using 4 electrons from cytochrome c in the IMS and 4 protons from the mitochondrial matrix. The protein is Cytochrome c oxidase subunit 3 of Aedes aegypti (Yellowfever mosquito).